A 421-amino-acid polypeptide reads, in one-letter code: C4-dicarboxylate transport protein (421 aa).

A run of 8 helical transmembrane segments spans residues 9–29, 39–59, 76–96, 145–165, 185–205, 219–239, 316–336, and 348–368; these read VQVI…PDVG, FINA…VLGI, FIYF…VVNI, GDIL…AALG, IIGY…AYTI, LMMS…NIIC, VFGV…LMLT, and FIVL…GLAL.

This sequence belongs to the dicarboxylate/amino acid:cation symporter (DAACS) (TC 2.A.23) family.

The protein resides in the cell membrane. In terms of biological role, responsible for the transport of succinate and fumarate, but not malate, across the membrane. This chain is C4-dicarboxylate transport protein (dctA), found in Bacillus subtilis (strain 168).